Consider the following 245-residue polypeptide: 2,3-bisphosphoglycerate-dependent phosphoglycerate mutase (245 aa).

Substrate contacts are provided by residues R8–N15, T21–G22, R60, E87–Y90, K98, R114–R115, and G183–N184. Residue H9 is the Tele-phosphohistidine intermediate of the active site. The active-site Proton donor/acceptor is E87.

It belongs to the phosphoglycerate mutase family. BPG-dependent PGAM subfamily.

It catalyses the reaction (2R)-2-phosphoglycerate = (2R)-3-phosphoglycerate. It functions in the pathway carbohydrate degradation; glycolysis; pyruvate from D-glyceraldehyde 3-phosphate: step 3/5. Catalyzes the interconversion of 2-phosphoglycerate and 3-phosphoglycerate. This chain is 2,3-bisphosphoglycerate-dependent phosphoglycerate mutase, found in Bacillus mycoides (strain KBAB4) (Bacillus weihenstephanensis).